Consider the following 517-residue polypeptide: Pentatricopeptide repeat-containing protein At1g77360, mitochondrial (517 aa).

The N-terminal 59 residues, 1–59 (MKRFRIRSVDFRQLVNFFSFMRWECSSSATVWVRFNMTIRIINRQSRFCCKSFLSARLY), are a transit peptide targeting the mitochondrion. PPR repeat units lie at residues 133–163 (SVRAYHMMIESTAKIRQYKLMWDLINAMRKK), 167–201 (NVETFCIVMRKYARAQKVDEAIYAFNVMEKYDLPP), 202–232 (NLVAFNGLLSALCKSKNVRKAQEVFENMRDR), 236–270 (DSKTYSILLEGWGKEPNLPKAREVFREMIDAGCHP), 271–305 (DIVTYSIMVDILCKAGRVDEALGIVRSMDPSICKP), 306–340 (TTFIYSVLVHTYGTENRLEEAVDTFLEMERSGMKA), 341–375 (DVAVFNSLIGAFCKANRMKNVYRVLKEMKSKGVTP), 376–406 (NSKSCNIILRHLIERGEKDEAFDVFRKMIKV), 410–444 (DADTYTMVIKMFCEKKEMETADKVWKYMRKKGVFP), and 445–479 (SMHTFSVLINGLCEERTTQKACVLLEEMIEMGIRP).

It belongs to the PPR family. P subfamily.

It is found in the mitochondrion. The protein is Pentatricopeptide repeat-containing protein At1g77360, mitochondrial of Arabidopsis thaliana (Mouse-ear cress).